The sequence spans 530 residues: 2,3-bisphosphoglycerate-independent phosphoglycerate mutase (530 aa).

Mn(2+) is bound by residues Asp15 and Ser65. The active-site Phosphoserine intermediate is Ser65. Substrate contacts are provided by residues His126, 155–156 (RD), Arg187, Arg193, 257–260 (RPDR), and Lys330. Positions 397, 401, 438, 439, and 456 each coordinate Mn(2+).

It belongs to the BPG-independent phosphoglycerate mutase family. As to quaternary structure, monomer. Requires Mn(2+) as cofactor.

The enzyme catalyses (2R)-2-phosphoglycerate = (2R)-3-phosphoglycerate. Its pathway is carbohydrate degradation; glycolysis; pyruvate from D-glyceraldehyde 3-phosphate: step 3/5. Functionally, catalyzes the interconversion of 2-phosphoglycerate and 3-phosphoglycerate. In Synechococcus sp. (strain JA-3-3Ab) (Cyanobacteria bacterium Yellowstone A-Prime), this protein is 2,3-bisphosphoglycerate-independent phosphoglycerate mutase.